Reading from the N-terminus, the 469-residue chain is Diaminobutyrate--2-oxoglutarate transaminase (469 aa).

N6-(pyridoxal phosphate)lysine is present on K290.

Belongs to the class-III pyridoxal-phosphate-dependent aminotransferase family. Requires pyridoxal 5'-phosphate as cofactor.

The protein localises to the cytoplasm. The enzyme catalyses L-2,4-diaminobutanoate + 2-oxoglutarate = L-aspartate 4-semialdehyde + L-glutamate. Its function is as follows. Involved in the degradation of ectoine, which allows H.elongata to utilize ectoine as both a carbon and a nitrogen source for growth. Probably catalyzes the conversion of L-2,4-diaminobutyrate (DABA) to L-aspartate beta-semialdehyde (ASA) by transamination with 2-oxoglutarate. This is Diaminobutyrate--2-oxoglutarate transaminase from Halomonas elongata (strain ATCC 33173 / DSM 2581 / NBRC 15536 / NCIMB 2198 / 1H9).